The primary structure comprises 168 residues: Ribosome-binding factor A (168 aa).

Residues 125-138 (RVREGAKHAGDSDP) are compositionally biased toward basic and acidic residues. Residues 125-168 (RVREGAKHAGDSDPYRVLGEGDLEGPATGGPDVEDEGGANSHDR) are disordered.

Belongs to the RbfA family. Monomer. Binds 30S ribosomal subunits, but not 50S ribosomal subunits or 70S ribosomes.

It localises to the cytoplasm. In terms of biological role, one of several proteins that assist in the late maturation steps of the functional core of the 30S ribosomal subunit. Associates with free 30S ribosomal subunits (but not with 30S subunits that are part of 70S ribosomes or polysomes). Required for efficient processing of 16S rRNA. May interact with the 5'-terminal helix region of 16S rRNA. The protein is Ribosome-binding factor A of Mycolicibacterium gilvum (strain PYR-GCK) (Mycobacterium gilvum (strain PYR-GCK)).